A 356-amino-acid polypeptide reads, in one-letter code: Protein HEXIM1 (356 aa).

Composition is skewed to basic and acidic residues over residues 1–11 and 24–47; these read MAEPLLSEHQH and VHEE…DSRW. The interval 1–160 is disordered; sequence MAEPLLSEHQ…RRRPSKKKRH (160 aa). Polar residues predominate over residues 48–58; sequence QSRASLQSGSR. Positions 84-93 are enriched in basic and acidic residues; it reads CLEKGEKGQN. Residues Ser98 and Ser103 each carry the phosphoserine modification. Basic residues predominate over residues 145–160; that stretch reads LGKKKHRRRPSKKKRH. The basic region; mediates nuclear localization and interaction with 7SK snRNA and NR3C1 stretch occupies residues 147 to 174; sequence KKKHRRRPSKKKRHWKPYYKLTWEEKKK. The interval 199-202 is interaction with P-TEFb; it reads PYNT. Residues 207-247 form an autoinhibitory acidic region; in absence of 7SK snRNA interacts with the basic region preventing interaction with P-TEFb and modulating subcellular localization region; that stretch reads MDDHDQEEPDLKTGLYPKRAAAKSDDTSDEDFVEEAGEEDG. The disordered stretch occupies residues 209–259; it reads DHDQEEPDLKTGLYPKRAAAKSDDTSDEDFVEEAGEEDGGSDGMGGDGSEF. Ser230 bears the Phosphoserine mark. Position 233 is a phosphothreonine (Thr233). The span at 233–248 shows a compositional bias: acidic residues; the sequence is TSDEDFVEEAGEEDGG. 3 positions are modified to phosphoserine: Ser234, Ser249, and Ser257. The stretch at 280–346 forms a coiled coil; that stretch reads SKQELIKEYL…LTENELHRQQ (67 aa). The mediates interaction with CCNT1 stretch occupies residues 283–311; that stretch reads ELIKEYLELEKCLSRKEDENNRLRLESKR. The tract at residues 307–352 is required for inhibition of ESR1-dependent transcription; the sequence is LESKRLGGVDARVRELELELDRLRAENRQLLTENELHRQQERAPPS. The segment at 337–356 is disordered; the sequence is LTENELHRQQERAPPSKFGD.

Belongs to the HEXIM family. Homooligomer and heterooligomer with HEXIM2; probably dimeric. Core component of the 7SK RNP complex, at least composed of 7SK RNA, LARP7, MEPCE, HEXIM1 (or HEXIM2) and P-TEFb (composed of CDK9 and CCNT1/cyclin-T1). Interacts with the N-CoR complex through NCOR1. Interacts with ESR1 and NR3C1. May interact with NF-kappa-B through RELA. Interacts with CCNT2; mediates formation of a tripartite complex with KPNA2. Part of the HDP-RNP complex composed of at least HEXIM1, PRKDC, XRCC5, XRCC6, paraspeckle proteins (SFPQ, NONO, PSPC1, RBM14, and MATR3) and NEAT1 non-coding RNA.

The protein resides in the nucleus. It localises to the cytoplasm. Transcriptional regulator which functions as a general RNA polymerase II transcription inhibitor. Core component of the 7SK RNP complex: in cooperation with 7SK snRNA sequesters P-TEFb in a large inactive 7SK snRNP complex preventing RNA polymerase II phosphorylation and subsequent transcriptional elongation. May also regulate NF-kappa-B, ESR1, NR3C1 and CIITA-dependent transcriptional activity. Plays a role in the regulation of DNA virus-mediated innate immune response by assembling into the HDP-RNP complex, a complex that serves as a platform for IRF3 phosphorylation and subsequent innate immune response activation through the cGAS-STING pathway. This Rattus norvegicus (Rat) protein is Protein HEXIM1 (Hexim1).